We begin with the raw amino-acid sequence, 309 residues long: Isethionate sulfite-lyase activating enzyme (309 aa).

The Radical SAM core domain occupies His22–Gly309. 11 residues coordinate [4Fe-4S] cluster: Cys36, Cys40, Cys43, Cys62, Cys68, Cys71, Cys75, Cys95, Cys98, Cys102, and Cys106. Residue Trp42–Ser44 participates in S-adenosyl-L-methionine binding. 2 4Fe-4S ferredoxin-type domains span residues Ile53–Asp85 and Asp86–Thr117. S-adenosyl-L-methionine-binding positions include Gly146, Asp195 to Lys197, and His268.

The protein belongs to the organic radical-activating enzymes family. As to quaternary structure, monomer. [4Fe-4S] cluster is required as a cofactor.

The enzyme catalyses glycyl-[protein] + reduced [flavodoxin] + S-adenosyl-L-methionine = glycin-2-yl radical-[protein] + semiquinone [flavodoxin] + 5'-deoxyadenosine + L-methionine + H(+). Its pathway is organosulfur degradation; alkanesulfonate degradation. Involved in an anaerobic respiration pathway that converts the sulfonate isethionate (2-hydroxyethanesulfonate) to ammonia, acetate and sulfide. Catalyzes activation of the isethionate sulfite-lyase IslA under anaerobic conditions by generation of an organic free radical on a glycine residue, via a homolytic cleavage of S-adenosyl-L-methionine (SAM). The sequence is that of Isethionate sulfite-lyase activating enzyme from Oleidesulfovibrio alaskensis (strain ATCC BAA-1058 / DSM 17464 / G20) (Desulfovibrio alaskensis).